Consider the following 469-residue polypeptide: MELGKTKRVHIVGIGGAGMSAIAELLLKSGFGVSGSDLSSGEVTEKLAAHGATIYLGHQASQVEACDVVVYSSAVKPEDNVEIAAAMQAGIPVVKRDEMLGELMRYKSGICVAGTHGKTTTTAMVATMLIEAGESPTVMIGGISDYLKGSTVVGSGKYMVIEADEYDRAFLKLTPTIAVLNSLEAEHMDTYGTLEDLKKAFVAFANKVPFYGRVICCADWPEIRGIIGSLNRLCTTFGIDEPADVSATDIVMANGRTTFTVQAFGEVYPGVSIAVPGRHNVQNALAAFATGLELGLDPARLVHGLGCYSGMRRRFQIKYDNGRGLLVVDDYAHHPSEVKATLKAARNGWPSARIVAVFQPHLFSRTREFASEYGWALSRADMVYISSIYPSREKEEDFPGVDAGMVAGAVTKAGGKHVLYVSDSGELKRLLLEEASAAGPRGTILLFMGAGDITAMASEVARCGEKENL.

114–120 is an ATP binding site; that stretch reads GTHGKTT.

The protein belongs to the MurCDEF family.

It localises to the cytoplasm. It carries out the reaction UDP-N-acetyl-alpha-D-muramate + L-alanine + ATP = UDP-N-acetyl-alpha-D-muramoyl-L-alanine + ADP + phosphate + H(+). It functions in the pathway cell wall biogenesis; peptidoglycan biosynthesis. Cell wall formation. This Chlorobium phaeovibrioides (strain DSM 265 / 1930) (Prosthecochloris vibrioformis (strain DSM 265)) protein is UDP-N-acetylmuramate--L-alanine ligase.